The chain runs to 447 residues: UPF0210 protein LAF_0976 (447 aa).

The protein belongs to the UPF0210 family. Homodimer.

This Limosilactobacillus fermentum (strain NBRC 3956 / LMG 18251) (Lactobacillus fermentum) protein is UPF0210 protein LAF_0976.